The sequence spans 205 residues: Ribosomal RNA small subunit methyltransferase G (205 aa).

Residues Gly-76, Leu-81, Ile-127–Glu-128, and Arg-140 each bind S-adenosyl-L-methionine.

This sequence belongs to the methyltransferase superfamily. RNA methyltransferase RsmG family.

It localises to the cytoplasm. It catalyses the reaction guanosine(527) in 16S rRNA + S-adenosyl-L-methionine = N(7)-methylguanosine(527) in 16S rRNA + S-adenosyl-L-homocysteine. Functionally, specifically methylates the N7 position of guanine in position 527 of 16S rRNA. In Francisella tularensis subsp. novicida (strain U112), this protein is Ribosomal RNA small subunit methyltransferase G.